Consider the following 359-residue polypeptide: MAKLPVDKMRELERRFGEIEARMSAGPAADVYVKLASEYSELQPVVKAIRELGLAEKEVADLKALLADKSTDREMRDLAEMELPDVEARLEGLEKEIQIQLLPKDAADEKSAILEIRAGTGGSEAALFAGDLFRMYERFAAGKGWKVEVLSSSEGDAGGFKEIIATVTGRGVFSKLKFESGVHRVQRVPDTETQGRIHTSAATVAVLPEAEEIDIEVRAEDIRIDTMRSSGAGGQHVNTTDSAVRITHLPTGLVVTSSEKSQHQNRAKAMQVLRSRLFDMERQRADSERSADRKSQVGSGDRSERIRTYNFPQGRVTDHRINLTLYKLDRMMMGEIDEVVDALIADYQAGQLAQLGEQA.

Residue Gln-235 is modified to N5-methylglutamine. Over residues 282–307 (RQRADSERSADRKSQVGSGDRSERIR) the composition is skewed to basic and acidic residues. The interval 282 to 309 (RQRADSERSADRKSQVGSGDRSERIRTY) is disordered.

Belongs to the prokaryotic/mitochondrial release factor family. In terms of processing, methylated by PrmC. Methylation increases the termination efficiency of RF1.

It localises to the cytoplasm. Functionally, peptide chain release factor 1 directs the termination of translation in response to the peptide chain termination codons UAG and UAA. This chain is Peptide chain release factor 1, found in Allorhizobium ampelinum (strain ATCC BAA-846 / DSM 112012 / S4) (Agrobacterium vitis (strain S4)).